Consider the following 195-residue polypeptide: MAASMDEDITANPPPSSEEDPLAEERLGFVREVGAQAVWSLSSCKPGFGVERLRDNIMDTYWQSDGQLPHLVNIQFHKRTNISQIYIYTDYKLDESYTPSRISIRSGTNFNDLQELQVMDLTEPTGWVQIPIKDGNVKSIRTFMLQIAVISNHQNGRDTHMRQIRIHAPVEGKHYPLELFGKFGTVDFQKFATIR.

The disordered stretch occupies residues 1–21 (MAASMDEDITANPPPSSEEDP). A DOC domain is found at 9 to 193 (ITANPPPSSE…GTVDFQKFAT (185 aa)).

This sequence belongs to the APC10 family. As to quaternary structure, the APC is composed of at least 11 subunits.

Its function is as follows. Component of the anaphase promoting complex/cyclosome (APC/C), a cell cycle-regulated ubiquitin ligase that controls progression through mitosis and the G1 phase of the cell cycle. The sequence is that of Anaphase-promoting complex subunit 10 (APC10) from Drosophila melanogaster (Fruit fly).